Reading from the N-terminus, the 141-residue chain is Nucleoside diphosphate kinase (141 aa).

Residues Lys11, Phe59, Arg87, Thr93, Arg104, and Asn114 each contribute to the ATP site. Catalysis depends on His117, which acts as the Pros-phosphohistidine intermediate.

The protein belongs to the NDK family. Homotetramer. Requires Mg(2+) as cofactor.

It localises to the cytoplasm. The enzyme catalyses a 2'-deoxyribonucleoside 5'-diphosphate + ATP = a 2'-deoxyribonucleoside 5'-triphosphate + ADP. The catalysed reaction is a ribonucleoside 5'-diphosphate + ATP = a ribonucleoside 5'-triphosphate + ADP. In terms of biological role, major role in the synthesis of nucleoside triphosphates other than ATP. The ATP gamma phosphate is transferred to the NDP beta phosphate via a ping-pong mechanism, using a phosphorylated active-site intermediate. The chain is Nucleoside diphosphate kinase from Vibrio vulnificus (strain CMCP6).